The chain runs to 289 residues: MLKNLFRKTKYITVSQKNIGNYKRENTPTIPDGMWVKCNKCGEILYQNDLEKNYMVCNLCGNHFRIGVKERIKYLFDKDTFKEWDYKIKTENPLDFKGYDEKIEHIKEKTNLSEAVTTGKGKIAGMEVVVCIMDSKFMMGSMGSVVGEKITRAIERAIELRLPVIIFTASGGARMQEGILSLMQMAKVSSALAKLDEEGLLYICVLTDPTTGGVTASFAMLGDIILAEPDALIGFAGKRVIEQTINEKLPEDFQKSEFLLEHGFIDKIVPRSDLRKVLAKLINMHQNSF.

Residues 34 to 289 form the CoA carboxyltransferase N-terminal domain; that stretch reads MWVKCNKCGE…KLINMHQNSF (256 aa). The Zn(2+) site is built by C38, C41, C57, and C60. The C4-type zinc-finger motif lies at 38–60; that stretch reads CNKCGEILYQNDLEKNYMVCNLC.

It belongs to the AccD/PCCB family. As to quaternary structure, acetyl-CoA carboxylase is a heterohexamer composed of biotin carboxyl carrier protein (AccB), biotin carboxylase (AccC) and two subunits each of ACCase subunit alpha (AccA) and ACCase subunit beta (AccD). Zn(2+) serves as cofactor.

Its subcellular location is the cytoplasm. The catalysed reaction is N(6)-carboxybiotinyl-L-lysyl-[protein] + acetyl-CoA = N(6)-biotinyl-L-lysyl-[protein] + malonyl-CoA. It participates in lipid metabolism; malonyl-CoA biosynthesis; malonyl-CoA from acetyl-CoA: step 1/1. Its function is as follows. Component of the acetyl coenzyme A carboxylase (ACC) complex. Biotin carboxylase (BC) catalyzes the carboxylation of biotin on its carrier protein (BCCP) and then the CO(2) group is transferred by the transcarboxylase to acetyl-CoA to form malonyl-CoA. This is Acetyl-coenzyme A carboxylase carboxyl transferase subunit beta from Clostridium botulinum (strain Kyoto / Type A2).